Consider the following 460-residue polypeptide: Putative glycoside/cation symporter YagG (460 aa).

Residues 1 to 9 (MTQLTMKDK) lie on the Cytoplasmic side of the membrane. The next 2 helical transmembrane spans lie at 10–30 (IGYG…MFLL) and 31–51 (AYFY…LFLV). The Cytoplasmic portion of the chain corresponds to 52–78 (SRVLDAVTDPLMGLLVDRTRTRHGQFR). Residues 79-99 (PFLLWGAIPFGIVCVLTFYTP) form a helical membrane-spanning segment. Residues 100–106 (DFSAQGK) are Periplasmic-facing. The chain crosses the membrane as a helical span at residues 107–127 (IIYACVTYILLTLVYTFVNVP). Residues 128 to 150 (YCAMPGVITADPKERHALQSWRF) are Cytoplasmic-facing. A helical transmembrane segment spans residues 151–171 (FLAAAGSLAISGIALPLVSII). The Periplasmic segment spans residues 172 to 179 (GKGDEQVG). Residues 180 to 200 (YFGAMCVLGLSGVVLLYVCFF) form a helical membrane-spanning segment. Topologically, residues 201–262 (TTKERYTFEV…FVKYVMDHPE (62 aa)) are cytoplasmic. A helical membrane pass occupies residues 263–283 (LATQFLLYGSLATMFGSLCSS). Over 284-308 (RLLGRFDRVTAFKWIIVAYSLISLL) the chain is Periplasmic. A helical membrane pass occupies residues 309–329 (IFVTPAEHIALIFALNILFLF). Residues 330–366 (VFNTTTPLQWLMASDVVDYEESRSGRRLDGLVFSTYL) are Cytoplasmic-facing. The chain crosses the membrane as a helical span at residues 367 to 387 (FSLKIGLAIGGAVVGWILAYV). Over 388 to 405 (NYSASSSVQPVEVLTTIK) the chain is Periplasmic. Residues 406–426 (ILFCVVPVVLYAGMFIMLSLY) traverse the membrane as a helical segment. Over 427 to 460 (KLTDARVEAISRQLIKHRAAQGEAVPDAATAASH) the chain is Cytoplasmic.

The protein belongs to the sodium:galactoside symporter (TC 2.A.2) family.

The protein resides in the cell inner membrane. The sequence is that of Putative glycoside/cation symporter YagG (yagG) from Escherichia coli (strain K12).